The sequence spans 663 residues: Methionine--tRNA ligase (663 aa).

The short motif at 10–20 is the 'HIGH' region element; that stretch reads AYTNGPLHLGH. 4 residues coordinate Zn(2+): cysteine 142, cysteine 145, cysteine 154, and cysteine 157. The short motif at 323 to 327 is the 'KMSKS' region element; sequence KMSTS. Residue threonine 326 coordinates ATP. Residues 563 to 663 enclose the tRNA-binding domain; it reads YFGNVDLRVG…RDLPVGSKIH (101 aa).

The protein belongs to the class-I aminoacyl-tRNA synthetase family. MetG type 1 subfamily. In terms of assembly, homodimer. Zn(2+) is required as a cofactor.

Its subcellular location is the cytoplasm. It carries out the reaction tRNA(Met) + L-methionine + ATP = L-methionyl-tRNA(Met) + AMP + diphosphate. Its function is as follows. Is required not only for elongation of protein synthesis but also for the initiation of all mRNA translation through initiator tRNA(fMet) aminoacylation. This is Methionine--tRNA ligase from Methanococcus maripaludis (strain C7 / ATCC BAA-1331).